A 295-amino-acid chain; its full sequence is Movement protein BC1 (295 aa).

The protein belongs to the begomovirus movement protein BC1 family. In terms of assembly, binds to dimeric supercoiled plasmid DNA. Phosphorylated.

The protein resides in the host cell membrane. It localises to the host microsome membrane. The protein localises to the host endoplasmic reticulum membrane. Functionally, transports viral genome to neighboring plant cells directly through plasmosdesmata, without any budding. The movement protein allows efficient cell to cell propagation, by bypassing the host cell wall barrier. Begomovirus genome is shuttled out of nucleus by Nuclear shuttle protein (NSP) and the movement protein transports the DNA-NSP complex to cell plasmodesmata and facilitates further movement across the cell wall. This chain is Movement protein BC1, found in Brassica oleracea (Wild cabbage).